The sequence spans 258 residues: uncharacterized protein (258 aa).

Residues Asn-60, Asn-104, and Asn-113 are each glycosylated (N-linked (GlcNAc...) asparagine; by host). The span at Thr-147 to Thr-156 shows a compositional bias: low complexity. Residues Thr-147–Asn-183 form a disordered region. Residues Leu-157–Lys-166 are compositionally biased toward polar residues. The span at His-167–Thr-177 shows a compositional bias: basic residues. Asn-183 carries N-linked (GlcNAc...) asparagine; by host glycosylation. Residues Ala-208–Phe-228 form a helical membrane-spanning segment.

This sequence belongs to the RL11 family.

It is found in the membrane. This is an uncharacterized protein from Human cytomegalovirus (strain AD169) (HHV-5).